Reading from the N-terminus, the 199-residue chain is Thioredoxin reductase-like selenoprotein T (199 aa).

The first 24 residues, 1-24, serve as a signal peptide directing secretion; it reads MRAAGLGLGIGLLLLAALAGPGGS. The segment at residues 50-53 is a cross-link (cysteinyl-selenocysteine (Cys-Sec)); the sequence is CVSU. Residue Sec-53 is a non-standard amino acid, selenocysteine. Residues 95–115 traverse the membrane as a helical segment; that stretch reads VFKLVLIGLIIVGKDPFAFFG.

The protein belongs to the SelWTH family. Selenoprotein T subfamily. Post-translationally, may contain a selenide-sulfide bond between Cys-50 and Sec-53. This bond is speculated to serve as redox-active pair.

The protein resides in the endoplasmic reticulum membrane. The catalysed reaction is [thioredoxin]-dithiol + NADP(+) = [thioredoxin]-disulfide + NADPH + H(+). Functionally, selenoprotein with thioredoxin reductase-like oxidoreductase activity. The chain is Thioredoxin reductase-like selenoprotein T from Gallus gallus (Chicken).